A 437-amino-acid polypeptide reads, in one-letter code: Glutamate-1-semialdehyde 2,1-aminomutase (437 aa).

An N6-(pyridoxal phosphate)lysine modification is found at Lys-277.

Belongs to the class-III pyridoxal-phosphate-dependent aminotransferase family. HemL subfamily. In terms of assembly, homodimer. Pyridoxal 5'-phosphate serves as cofactor.

It localises to the cytoplasm. The enzyme catalyses (S)-4-amino-5-oxopentanoate = 5-aminolevulinate. It functions in the pathway porphyrin-containing compound metabolism; protoporphyrin-IX biosynthesis; 5-aminolevulinate from L-glutamyl-tRNA(Glu): step 2/2. The protein operates within porphyrin-containing compound metabolism; chlorophyll biosynthesis. This is Glutamate-1-semialdehyde 2,1-aminomutase from Thermosynechococcus vestitus (strain NIES-2133 / IAM M-273 / BP-1).